A 272-amino-acid chain; its full sequence is ATP-dependent Clp protease proteolytic subunit, mitochondrial (272 aa).

The transit peptide at 1–52 (MWPRVLLGEARVAVDGCRALLSRLAVHFSPPWTAVSCSPLRRSLHGTATRAF) directs the protein to the mitochondrion. The Nucleophile role is filled by S149. Residue H174 is part of the active site. N6-succinyllysine is present on K196. K207 is subject to N6-acetyllysine. A disordered region spans residues 240-272 (VLVHPPQDGEDEPELVQKETATAPTDPPAPTST).

The protein belongs to the peptidase S14 family. In terms of assembly, fourteen CLPP subunits assemble into 2 heptameric rings which stack back to back to give a disk-like structure with a central cavity. Component of the ClpXP complex formed by the assembly of two CLPP heptameric rings with two CLPX hexameric rings, giving rise to a symmetrical structure with two central CLPP rings flanked by a CLPX ring at either end of the complex. In terms of tissue distribution, detected in liver (at protein level). High levels found in heart, liver and skeletal muscle.

The protein localises to the mitochondrion matrix. It catalyses the reaction Hydrolysis of proteins to small peptides in the presence of ATP and magnesium. alpha-casein is the usual test substrate. In the absence of ATP, only oligopeptides shorter than five residues are hydrolyzed (such as succinyl-Leu-Tyr-|-NHMec, and Leu-Tyr-Leu-|-Tyr-Trp, in which cleavage of the -Tyr-|-Leu- and -Tyr-|-Trp bonds also occurs).. Protease component of the ClpXP complex that cleaves peptides and various proteins in an ATP-dependent process. Has low peptidase activity in the absence of CLPX. The ClpXP complex can degrade CSN1S1, CSN2 and CSN3, as well as synthetic peptides (in vitro) and may be responsible for a fairly general and central housekeeping function rather than for the degradation of specific substrates. Cleaves PINK1 in the mitochondrion. This Mus musculus (Mouse) protein is ATP-dependent Clp protease proteolytic subunit, mitochondrial.